A 234-amino-acid chain; its full sequence is Sugar fermentation stimulation protein A (234 aa).

A DNA-binding region (H-T-H motif) is located at residues 201–220 (LLSEAQQRGVEILAYKAEIS).

It belongs to the SfsA family.

Functionally, binds to DNA non-specifically. Could be a regulatory factor involved in maltose metabolism. The chain is Sugar fermentation stimulation protein A from Escherichia coli (strain 55989 / EAEC).